We begin with the raw amino-acid sequence, 60 residues long: Protein translocase subunit SecE (60 aa).

Residues 1–31 (MFARLIRYFQEARAELARVTWPTREQVVEGT) lie on the Cytoplasmic side of the membrane. A helical transmembrane segment spans residues 32–52 (QAILLFTLAFMVILGLYDTVF). Residues 53-60 (RFLIGLLR) lie on the Extracellular side of the membrane.

Belongs to the SecE/SEC61-gamma family. Component of the Sec protein translocase complex. Heterotrimer consisting of SecY, SecE and SecG subunits. The heterotrimers can form oligomers, although 1 heterotrimer is thought to be able to translocate proteins. Interacts with SecDF, and other proteins may be involved. The channel interacts with SecA via subunit SecY.

Its subcellular location is the cell inner membrane. Functionally, essential subunit of the protein translocation channel SecYEG. Clamps together the 2 halves of SecY. May contact the channel plug during translocation. The sequence is that of Protein translocase subunit SecE from Thermus thermophilus (strain ATCC 27634 / DSM 579 / HB8).